Consider the following 467-residue polypeptide: Trigger factor (467 aa).

In terms of domain architecture, PPIase FKBP-type spans 174-261 (SDIAILTFKG…LQDLKTRELP (88 aa)). The tract at residues 439–467 (PKKALNEKVKSSKPKNTQKKTDKTKKDSP) is disordered. A compositionally biased stretch (basic and acidic residues) spans 457-467 (KKTDKTKKDSP).

It belongs to the FKBP-type PPIase family. Tig subfamily.

Its subcellular location is the cytoplasm. It catalyses the reaction [protein]-peptidylproline (omega=180) = [protein]-peptidylproline (omega=0). In terms of biological role, involved in protein export. Acts as a chaperone by maintaining the newly synthesized protein in an open conformation. Functions as a peptidyl-prolyl cis-trans isomerase. The polypeptide is Trigger factor (Prochlorococcus marinus (strain SARG / CCMP1375 / SS120)).